Here is a 281-residue protein sequence, read N- to C-terminus: UPF0046 protein C25E10.12 (281 aa).

Belongs to the UPF0046 family.

The sequence is that of UPF0046 protein C25E10.12 from Caenorhabditis elegans.